The chain runs to 636 residues: Polyglycine hydrolase (636 aa).

Residues 1–22 form the signal peptide; sequence MHSLSLRRLLTSVLSLCSCSSA. Residues Asn30 and Asn151 are each glycosylated (N-linked (GlcNAc...) asparagine). Cys141 and Cys175 form a disulfide bridge. Residue Ser363 is part of the active site. N-linked (GlcNAc...) asparagine glycosylation is found at Asn383 and Asn481. Residues 512–540 form a disordered region; it reads TEDRIVQESKNTGQDPVHPQSAKLVPGPH.

It belongs to the peptidase S12 family.

It localises to the secreted. It carries out the reaction a glycyl-glycyl-[protein] + H2O = N-terminal glycyl-[protein] + [protein]-C-terminal glycine. Serine-type endopeptidase that cleaves Gly-Gly bonds in the polyglycine linker of host plant class IV chitinases to disrupt their chitin-binding, and thereby plays a role in lowering the defense responses of the host to the fungus. Degrades Z.mays Endochitinase A (CHIA) in vitro, although corn is not its host species. In Fusarium vanettenii (strain ATCC MYA-4622 / CBS 123669 / FGSC 9596 / NRRL 45880 / 77-13-4) (Fusarium solani subsp. pisi), this protein is Polyglycine hydrolase.